A 407-amino-acid polypeptide reads, in one-letter code: Phosphopentomutase (407 aa).

Positions 10, 306, 311, 347, 348, and 359 each coordinate Mn(2+).

It belongs to the phosphopentomutase family. Mn(2+) is required as a cofactor.

Its subcellular location is the cytoplasm. It catalyses the reaction 2-deoxy-alpha-D-ribose 1-phosphate = 2-deoxy-D-ribose 5-phosphate. The enzyme catalyses alpha-D-ribose 1-phosphate = D-ribose 5-phosphate. Its pathway is carbohydrate degradation; 2-deoxy-D-ribose 1-phosphate degradation; D-glyceraldehyde 3-phosphate and acetaldehyde from 2-deoxy-alpha-D-ribose 1-phosphate: step 1/2. Its function is as follows. Isomerase that catalyzes the conversion of deoxy-ribose 1-phosphate (dRib-1-P) and ribose 1-phosphate (Rib-1-P) to deoxy-ribose 5-phosphate (dRib-5-P) and ribose 5-phosphate (Rib-5-P), respectively. The polypeptide is Phosphopentomutase (Yersinia pseudotuberculosis serotype O:1b (strain IP 31758)).